The sequence spans 248 residues: PF03932 family protein CutC (248 aa).

Belongs to the CutC family. As to quaternary structure, homodimer.

It is found in the cytoplasm. This Escherichia coli O81 (strain ED1a) protein is PF03932 family protein CutC.